Here is a 341-residue protein sequence, read N- to C-terminus: Phosphate acyltransferase (341 aa).

It belongs to the PlsX family. In terms of assembly, homodimer. Probably interacts with PlsY.

The protein resides in the cytoplasm. It catalyses the reaction a fatty acyl-[ACP] + phosphate = an acyl phosphate + holo-[ACP]. It functions in the pathway lipid metabolism; phospholipid metabolism. Functionally, catalyzes the reversible formation of acyl-phosphate (acyl-PO(4)) from acyl-[acyl-carrier-protein] (acyl-ACP). This enzyme utilizes acyl-ACP as fatty acyl donor, but not acyl-CoA. The chain is Phosphate acyltransferase from Saccharophagus degradans (strain 2-40 / ATCC 43961 / DSM 17024).